Here is a 303-residue protein sequence, read N- to C-terminus: Dihydroorotate dehydrogenase B (NAD(+)), catalytic subunit (303 aa).

FMN-binding positions include S21 and 45–46; that span reads KG. Substrate-binding positions include K45 and 69–73; that span reads NCIGL. FMN is bound by residues N98 and N126. Substrate is bound at residue N126. The active-site Nucleophile is the C129. 2 residues coordinate FMN: K165 and V191. 192-193 is a substrate binding site; the sequence is NT. FMN is bound by residues G217 and 243-244; that span reads GG.

This sequence belongs to the dihydroorotate dehydrogenase family. Type 1 subfamily. As to quaternary structure, heterotetramer of 2 PyrK and 2 PyrD type B subunits. FMN is required as a cofactor.

The protein resides in the cytoplasm. The enzyme catalyses (S)-dihydroorotate + NAD(+) = orotate + NADH + H(+). The protein operates within pyrimidine metabolism; UMP biosynthesis via de novo pathway; orotate from (S)-dihydroorotate (NAD(+) route): step 1/1. Functionally, catalyzes the conversion of dihydroorotate to orotate with NAD(+) as electron acceptor. This Brachyspira hyodysenteriae (strain ATCC 49526 / WA1) protein is Dihydroorotate dehydrogenase B (NAD(+)), catalytic subunit (pyrD).